The following is a 515-amino-acid chain: Bifunctional NAD(P)H-hydrate repair enzyme Nnr (515 aa).

The NAD(P)H-hydrate epimerase stretch occupies residues 1-227 (MTDHTMKKNP…GLDSWLAGQE (227 aa)). The YjeF N-terminal domain occupies 23–225 (IRRGEREAAD…SLGLDSWLAG (203 aa)). Positions 71-75 (NNGGD) are NADPHX 1; for epimerase activity. 2 residues coordinate K(+): asparagine 72 and aspartate 135. Positions 139–145 (GTGLRQA) are NADPHX 1; for epimerase activity. Aspartate 168 contacts (6S)-NADPHX. Serine 171 contacts K(+). The region spanning 234–501 (SAEQLSHWLK…STLQRIVNPE (268 aa)) is the YjeF C-terminal domain. An ADP-dependent (S)-NAD(P)H-hydrate dehydratase region spans residues 235-515 (AEQLSHWLKP…NHDESSNSAP (281 aa)). Position 329 (glycine 329) interacts with (6S)-NADPHX. An NADPHX 2; for dehydratase activity region spans residues 375–381 (HPGEAAR). ADP is bound by residues 412-416 (KGAGT) and 432-441 (NAGMASGGMG). Residue aspartate 442 participates in (6S)-NADPHX binding.

This sequence in the N-terminal section; belongs to the NnrE/AIBP family. The protein in the C-terminal section; belongs to the NnrD/CARKD family. Requires K(+) as cofactor.

It catalyses the reaction (6S)-NADHX + ADP = AMP + phosphate + NADH + H(+). The enzyme catalyses (6S)-NADPHX + ADP = AMP + phosphate + NADPH + H(+). The catalysed reaction is (6R)-NADHX = (6S)-NADHX. It carries out the reaction (6R)-NADPHX = (6S)-NADPHX. Functionally, bifunctional enzyme that catalyzes the epimerization of the S- and R-forms of NAD(P)HX and the dehydration of the S-form of NAD(P)HX at the expense of ADP, which is converted to AMP. This allows the repair of both epimers of NAD(P)HX, a damaged form of NAD(P)H that is a result of enzymatic or heat-dependent hydration. This is Bifunctional NAD(P)H-hydrate repair enzyme Nnr (nnr) from Escherichia coli (strain K12).